The chain runs to 447 residues: Interferon-induced protein 44-like (447 aa).

Residues 1-159 (MKVTARLTWI…PVECEIFRVD (159 aa)) form the TLDc domain.

This sequence belongs to the IFI44 family. In terms of assembly, HA-28 antigen forms a complex with Kb MHC in BALB.B donor cells. Interacts with FKBP5; this interaction modulates IKBKB and IKBKE kinase activities. Expressed on cells of the hematopoietic lineage. Detected in transformed cell lines of the macrophage and B-cell lineage. Expressed in spleen and bone marrow.

Its subcellular location is the cytoplasm. Its function is as follows. Type I interferon-stimulated gene (ISG) that plays a critical role in antiviral and antibacterial activity. During bacterial infection, promotes macrophage differentiation and facilitates inflammatory cytokine secretion. Plays a role in the control of respiratory syncycial virus/RSV infection, reducing the ability of the virus to replicate. Acts as a feedback regulator of IFN responses by negatively regulating IKBKB kinase activity through interaction with FKBP5. In terms of biological role, precursor of the histocompatibility antigen HA-28 in BALB.B mice. More generally, minor histocompatibility antigens refer to immunogenic peptide which, when complexed with MHC, can generate an immune response after recognition by specific T-cells. The peptides are derived from polymorphic intracellular proteins, which are cleaved by normal pathways of antigen processing. The binding of these peptides to MHC molecules and its expression on the cell surface can stimulate T-cell responses and thereby trigger graft rejection or graft-versus-host disease (GVHD). More specifically, HA-28 minor antigen is transcribed in the BALB.B donor but not in host C57BL/6 cells. HA-28 is presented to the donor BALB.B cell surface by Kb MHC. This complex HA-28/Kb MHC elicits cytotoxic T-cell response in C57BL/6 mice immunized with BALB.B spleen cells. It induces C57BL/6 mice cells recognition and lysis by CD8 T-cell from BALB.B mice. This Mus musculus (Mouse) protein is Interferon-induced protein 44-like (Ifi44l).